The chain runs to 292 residues: Lipoyl synthase (292 aa).

7 residues coordinate [4Fe-4S] cluster: cysteine 34, cysteine 39, cysteine 45, cysteine 60, cysteine 64, cysteine 67, and serine 273. Residues 46 to 262 form the Radical SAM core domain; that stretch reads WNKKHATVMI…KYVAYSKGFL (217 aa).

The protein belongs to the radical SAM superfamily. Lipoyl synthase family. Requires [4Fe-4S] cluster as cofactor.

The protein localises to the cytoplasm. It carries out the reaction [[Fe-S] cluster scaffold protein carrying a second [4Fe-4S](2+) cluster] + N(6)-octanoyl-L-lysyl-[protein] + 2 oxidized [2Fe-2S]-[ferredoxin] + 2 S-adenosyl-L-methionine + 4 H(+) = [[Fe-S] cluster scaffold protein] + N(6)-[(R)-dihydrolipoyl]-L-lysyl-[protein] + 4 Fe(3+) + 2 hydrogen sulfide + 2 5'-deoxyadenosine + 2 L-methionine + 2 reduced [2Fe-2S]-[ferredoxin]. The protein operates within protein modification; protein lipoylation via endogenous pathway; protein N(6)-(lipoyl)lysine from octanoyl-[acyl-carrier-protein]: step 2/2. In terms of biological role, catalyzes the radical-mediated insertion of two sulfur atoms into the C-6 and C-8 positions of the octanoyl moiety bound to the lipoyl domains of lipoate-dependent enzymes, thereby converting the octanoylated domains into lipoylated derivatives. In Ehrlichia ruminantium (strain Welgevonden), this protein is Lipoyl synthase.